Here is an 865-residue protein sequence, read N- to C-terminus: DNA topoisomerase 3-beta (865 aa).

Residues 6–151 (RVLMVAEKPS…KVYRARFSSV (146 aa)) enclose the Toprim domain. Mg(2+) is bound by residues glutamate 12, aspartate 116, and aspartate 118. The Topo IA-type catalytic domain occupies 167 to 587 (NRDEALAVDA…HVIQQFRRKF (421 aa)). An interaction with DNA region spans residues 209–214 (SYGPCQ). Tyrosine 331 functions as the O-(5'-phospho-DNA)-tyrosine intermediate in the catalytic mechanism. The segment covering 833–853 (RRGGRGRGRGRGRGRGGRRGS) has biased composition (basic residues). Residues 833-865 (RRGGRGRGRGRGRGRGGRRGSKSVDPKMSFRDF) are disordered. Over residues 854 to 865 (KSVDPKMSFRDF) the composition is skewed to basic and acidic residues.

This sequence belongs to the type IA topoisomerase family. Mg(2+) serves as cofactor.

It catalyses the reaction ATP-independent breakage of single-stranded DNA, followed by passage and rejoining.. In terms of biological role, releases the supercoiling and torsional tension of DNA introduced during the DNA replication and transcription by transiently cleaving and rejoining one strand of the DNA duplex. Introduces a single-strand break via transesterification at a target site in duplex DNA. The scissile phosphodiester is attacked by the catalytic tyrosine of the enzyme, resulting in the formation of a DNA-(5'-phosphotyrosyl)-enzyme intermediate and the expulsion of a 3'-OH DNA strand. The free DNA strand than undergoes passage around the unbroken strand thus removing DNA supercoils. Finally, in the religation step, the DNA 3'-OH attacks the covalent intermediate to expel the active-site tyrosine and restore the DNA phosphodiester backbone. This Arabidopsis thaliana (Mouse-ear cress) protein is DNA topoisomerase 3-beta.